A 420-amino-acid chain; its full sequence is UDP-N-acetylglucosamine 1-carboxyvinyltransferase (420 aa).

Residue 22-23 coordinates phosphoenolpyruvate; sequence KN. Residue Arg91 coordinates UDP-N-acetyl-alpha-D-glucosamine. Cys115 functions as the Proton donor in the catalytic mechanism. Position 115 is a 2-(S-cysteinyl)pyruvic acid O-phosphothioketal (Cys115). UDP-N-acetyl-alpha-D-glucosamine is bound by residues 120–124, 160–163, Asp305, and Ile327; these read RPVDL and KVSV.

This sequence belongs to the EPSP synthase family. MurA subfamily.

It is found in the cytoplasm. The catalysed reaction is phosphoenolpyruvate + UDP-N-acetyl-alpha-D-glucosamine = UDP-N-acetyl-3-O-(1-carboxyvinyl)-alpha-D-glucosamine + phosphate. It participates in cell wall biogenesis; peptidoglycan biosynthesis. Cell wall formation. Adds enolpyruvyl to UDP-N-acetylglucosamine. This Pectobacterium atrosepticum (strain SCRI 1043 / ATCC BAA-672) (Erwinia carotovora subsp. atroseptica) protein is UDP-N-acetylglucosamine 1-carboxyvinyltransferase.